Consider the following 210-residue polypeptide: Dof zinc finger protein DOF4.4 (210 aa).

The Dof-type zinc finger occupies 24–78 (RVCPRCDSDNTKFCFYNNYSESQPRYFCKNCRRYWTHGGALRNIPVGGSCRKPKR). Positions 26, 29, 51, and 54 each coordinate Zn(2+).

The protein localises to the nucleus. Transcription factor that binds specifically to a 5'-AA[AG]G-3' consensus core sequence. The chain is Dof zinc finger protein DOF4.4 (DOF4.4) from Arabidopsis thaliana (Mouse-ear cress).